The following is a 1860-amino-acid chain: Proprotein convertase subtilisin/kexin type 5 (1860 aa).

The first 32 residues, 1–32 (MGWGSRCCCPGRLDLLCVLALLGGCLLPVCRT), serve as a signal peptide directing secretion. A propeptide spanning residues 33 to 114 (RVYTNHWAVK…QQVVKKRTKR (82 aa)) is cleaved from the precursor. At 115–1743 (DYDFSRAQST…VRPATEHFKT (1629 aa)) the chain is on the extracellular side. In terms of domain architecture, Peptidase S8 spans 134–453 (MWYMHCSDNT…FGLMDAEAMV (320 aa)). Residues D171 and H212 each act as charge relay system in the active site. N225 and N381 each carry an N-linked (GlcNAc...) asparagine glycan. S386 serves as the catalytic Charge relay system. The P/Homo B domain occupies 461–601 (TVPRQHVCVE…SLVLYGTSVQ (141 aa)). The Cell attachment site signature appears at 519 to 521 (RGD). 22 FU repeats span residues 630–680 (EDYA…GHYH), 683–730 (KKRC…GSYQ), 734–777 (KNLC…GRYF), 779–824 (GQDC…SYYF), 832–879 (YKSC…GEYV), 882–927 (HGHC…WKFE), 929–979 (ENQC…GHYA), 982–1028 (GNTC…GEVQ), 1032–1077 (YEEC…KTYS), 1079–1121 (EVEC…GFYG), 1125–1168 (MGEC…KTQE), 1177–1221 (LRKL…GTWP), 1225–1272 (SGSC…GSYA), 1274–1318 (DGIC…RHVA), 1320–1363 (KGVC…GFYA), 1365–1411 (SRHC…GTYY), 1415–1461 (TKEC…SEYW), 1465–1510 (APGC…GYYA), 1514–1559 (SNRC…GYYA), 1563–1610 (TGRC…HYYV), 1614–1659 (TQTC…GEYR), and 1665–1712 (KFNC…SDPP). Residues 636-1727 (CDPECSEVGC…CDCQDTTDEC (1092 aa)) are CRM (Cys-rich motif). The N-linked (GlcNAc...) asparagine glycan is linked to N665. Residues N752, N802, and N852 are each glycosylated (N-linked (GlcNAc...) asparagine). The PLAC domain maps to 869 to 913 (MGAICKDGEYVDEHGHCQTCEASCAKCQGPTQEDCTTCPMTRIFD). N-linked (GlcNAc...) asparagine glycosylation is present at N1014. An N-linked (GlcNAc...) asparagine glycan is attached at N1191. N1290 carries an N-linked (GlcNAc...) asparagine glycan. The N-linked (GlcNAc...) asparagine glycan is linked to N1497. Residues N1685 and N1707 are each glycosylated (N-linked (GlcNAc...) asparagine). A helical transmembrane segment spans residues 1744–1764 (ALFITSSMMLVLLLGAAVVVW). The Cytoplasmic portion of the chain corresponds to 1765 to 1860 (KKSRGRVQPA…YDDESYSYYQ (96 aa)). 2 AC regions span residues 1807-1826 (VIEY…IVYM) and 1838-1860 (YGLL…SYYQ).

Belongs to the peptidase S8 family. Expressed in T-lymphocytes.

It is found in the secreted. It localises to the endomembrane system. In terms of biological role, serine endoprotease that processes various proproteins by cleavage at paired basic amino acids, recognizing the RXXX[KR]R consensus motif. Likely functions in the constitutive and regulated secretory pathways. Plays an essential role in pregnancy establishment by proteolytic activation of a number of important factors such as BMP2, CALD1 and alpha-integrins. The protein is Proprotein convertase subtilisin/kexin type 5 (PCSK5) of Homo sapiens (Human).